Reading from the N-terminus, the 486-residue chain is UDP-N-acetylmuramoyl-L-alanyl-D-glutamate--2,6-diaminopimelate ligase (486 aa).

Ser33 provides a ligand contact to UDP-N-acetyl-alpha-D-muramoyl-L-alanyl-D-glutamate. Residue 110–116 (GTNGKTS) coordinates ATP. UDP-N-acetyl-alpha-D-muramoyl-L-alanyl-D-glutamate contacts are provided by residues 152–153 (TT), Ser179, Gln185, and Arg187. The residue at position 219 (Lys219) is an N6-carboxylysine. Meso-2,6-diaminopimelate is bound by residues Arg383, 407–410 (DNPR), Gly455, and Glu459. A Meso-diaminopimelate recognition motif motif is present at residues 407–410 (DNPR).

Belongs to the MurCDEF family. MurE subfamily. Requires Mg(2+) as cofactor. In terms of processing, carboxylation is probably crucial for Mg(2+) binding and, consequently, for the gamma-phosphate positioning of ATP.

It is found in the cytoplasm. The catalysed reaction is UDP-N-acetyl-alpha-D-muramoyl-L-alanyl-D-glutamate + meso-2,6-diaminopimelate + ATP = UDP-N-acetyl-alpha-D-muramoyl-L-alanyl-gamma-D-glutamyl-meso-2,6-diaminopimelate + ADP + phosphate + H(+). It functions in the pathway cell wall biogenesis; peptidoglycan biosynthesis. Catalyzes the addition of meso-diaminopimelic acid to the nucleotide precursor UDP-N-acetylmuramoyl-L-alanyl-D-glutamate (UMAG) in the biosynthesis of bacterial cell-wall peptidoglycan. This is UDP-N-acetylmuramoyl-L-alanyl-D-glutamate--2,6-diaminopimelate ligase from Zymomonas mobilis subsp. mobilis (strain ATCC 31821 / ZM4 / CP4).